A 241-amino-acid chain; its full sequence is Adenosine 5'-phosphosulfate reductase (241 aa).

[4Fe-4S] cluster contacts are provided by Cys122, Cys123, Cys205, and Cys208. Residue Cys231 is the Nucleophile; cysteine thiosulfonate intermediate of the active site.

Belongs to the PAPS reductase family. CysH subfamily. Requires [4Fe-4S] cluster as cofactor.

It localises to the cytoplasm. The catalysed reaction is [thioredoxin]-disulfide + sulfite + AMP + 2 H(+) = adenosine 5'-phosphosulfate + [thioredoxin]-dithiol. It participates in sulfur metabolism; hydrogen sulfide biosynthesis; sulfite from sulfate. In terms of biological role, catalyzes the formation of sulfite from adenosine 5'-phosphosulfate (APS) using thioredoxin as an electron donor. The chain is Adenosine 5'-phosphosulfate reductase from Shouchella clausii (strain KSM-K16) (Alkalihalobacillus clausii).